A 628-amino-acid polypeptide reads, in one-letter code: tRNA uridine 5-carboxymethylaminomethyl modification enzyme MnmG (628 aa).

Residues 14–19 (GAGHAG), valine 126, and serine 181 contribute to the FAD site. An NAD(+)-binding site is contributed by 273-287 (GPRYCPSIEDKVVRF). Glutamine 370 is a binding site for FAD.

It belongs to the MnmG family. As to quaternary structure, homodimer. Heterotetramer of two MnmE and two MnmG subunits. Requires FAD as cofactor.

The protein resides in the cytoplasm. Its function is as follows. NAD-binding protein involved in the addition of a carboxymethylaminomethyl (cmnm) group at the wobble position (U34) of certain tRNAs, forming tRNA-cmnm(5)s(2)U34. In Bacillus licheniformis (strain ATCC 14580 / DSM 13 / JCM 2505 / CCUG 7422 / NBRC 12200 / NCIMB 9375 / NCTC 10341 / NRRL NRS-1264 / Gibson 46), this protein is tRNA uridine 5-carboxymethylaminomethyl modification enzyme MnmG.